A 79-amino-acid polypeptide reads, in one-letter code: MSDIEARVRKIVAEKLNVDEEKVTNTSTFVDELGADSLDTVELVMALEDEFQCEIGDEAAEKMTSVQHAIDYIKSNAKC.

Positions 2–77 constitute a Carrier domain; it reads SDIEARVRKI…HAIDYIKSNA (76 aa). Ser-37 carries the post-translational modification O-(pantetheine 4'-phosphoryl)serine.

It belongs to the acyl carrier protein (ACP) family. Post-translationally, 4'-phosphopantetheine is transferred from CoA to a specific serine of apo-ACP by AcpS. This modification is essential for activity because fatty acids are bound in thioester linkage to the sulfhydryl of the prosthetic group.

It localises to the cytoplasm. It participates in lipid metabolism; fatty acid biosynthesis. In terms of biological role, carrier of the growing fatty acid chain in fatty acid biosynthesis. The protein is Acyl carrier protein of Xylella fastidiosa (strain M23).